The sequence spans 403 residues: Flavohemoprotein (403 aa).

In terms of domain architecture, Globin spans 1 to 138 (MLTQKTKDIV…LADVLMGMES (138 aa)). Residue His-85 coordinates heme b. Active-site charge relay system residues include Tyr-95 and Glu-137. Positions 149-403 (GGWKGWRTFV…EVFGPDLFAE (255 aa)) are reductase. Positions 152-262 (KGWRTFVIRE…AAPYGSFHID (111 aa)) constitute an FAD-binding FR-type domain. Residues Tyr-190 and 206–209 (RQYS) contribute to the FAD site. 275–280 (GVGLTP) serves as a coordination point for NADP(+). Residue 395–398 (VFGP) coordinates FAD.

It belongs to the globin family. Two-domain flavohemoproteins subfamily. In the C-terminal section; belongs to the flavoprotein pyridine nucleotide cytochrome reductase family. Monomer. Requires FAD as cofactor. Heme b serves as cofactor.

Its subcellular location is the cytoplasm. It catalyses the reaction 2 nitric oxide + NADPH + 2 O2 = 2 nitrate + NADP(+) + H(+). The catalysed reaction is 2 nitric oxide + NADH + 2 O2 = 2 nitrate + NAD(+) + H(+). In terms of biological role, is involved in NO detoxification in an aerobic process, termed nitric oxide dioxygenase (NOD) reaction that utilizes O(2) and NAD(P)H to convert NO to nitrate, which protects the bacterium from various noxious nitrogen compounds. Therefore, plays a central role in the inducible response to nitrosative stress. Its function is as follows. In the presence of oxygen and NADH, FHP has NADH oxidase activity, which leads to the generation of superoxide and H(2)O(2), both in vitro and in vivo, and it has been suggested that FHP might act as an amplifier of superoxide stress. Under anaerobic conditions, FHP also exhibits nitric oxide reductase and FAD reductase activities. However, all these reactions are much lower than NOD activity. The sequence is that of Flavohemoprotein (hmp) from Cupriavidus necator (strain ATCC 17699 / DSM 428 / KCTC 22496 / NCIMB 10442 / H16 / Stanier 337) (Ralstonia eutropha).